A 162-amino-acid polypeptide reads, in one-letter code: Nucleotide-binding protein SAV_4896 (162 aa).

Belongs to the YajQ family.

Functionally, nucleotide-binding protein. This chain is Nucleotide-binding protein SAV_4896, found in Streptomyces avermitilis (strain ATCC 31267 / DSM 46492 / JCM 5070 / NBRC 14893 / NCIMB 12804 / NRRL 8165 / MA-4680).